The primary structure comprises 169 residues: 6,7-dimethyl-8-ribityllumazine synthase (169 aa).

Residues Tyr-30, 61–63 (ALE), and 90–92 (CVI) each bind 5-amino-6-(D-ribitylamino)uracil. 95 to 96 (ET) provides a ligand contact to (2S)-2-hydroxy-3-oxobutyl phosphate. The active-site Proton donor is His-98. Asn-123 contributes to the 5-amino-6-(D-ribitylamino)uracil binding site. Arg-137 provides a ligand contact to (2S)-2-hydroxy-3-oxobutyl phosphate.

It belongs to the DMRL synthase family.

It catalyses the reaction (2S)-2-hydroxy-3-oxobutyl phosphate + 5-amino-6-(D-ribitylamino)uracil = 6,7-dimethyl-8-(1-D-ribityl)lumazine + phosphate + 2 H2O + H(+). Its pathway is cofactor biosynthesis; riboflavin biosynthesis; riboflavin from 2-hydroxy-3-oxobutyl phosphate and 5-amino-6-(D-ribitylamino)uracil: step 1/2. In terms of biological role, catalyzes the formation of 6,7-dimethyl-8-ribityllumazine by condensation of 5-amino-6-(D-ribitylamino)uracil with 3,4-dihydroxy-2-butanone 4-phosphate. This is the penultimate step in the biosynthesis of riboflavin. The chain is 6,7-dimethyl-8-ribityllumazine synthase from Methylorubrum populi (strain ATCC BAA-705 / NCIMB 13946 / BJ001) (Methylobacterium populi).